Reading from the N-terminus, the 363-residue chain is Trans-2,3-enoyl-CoA reductase-like (363 aa).

Residue S37 is modified to Phosphoserine. Helical transmembrane passes span 143 to 163, 217 to 237, and 311 to 331; these read WTTVFLAEYTGPLLIYLLFYL, LIMSCAFYWGFTSWIAYYINH, and ISFTVMTQTLPVGIFTLLMSI.

It belongs to the steroid 5-alpha reductase family. Predominantly expressed in the heart and skeletal muscle.

The protein localises to the membrane. The protein resides in the endoplasmic reticulum. This is Trans-2,3-enoyl-CoA reductase-like (TECRL) from Homo sapiens (Human).